We begin with the raw amino-acid sequence, 53 residues long: Neuronal protein NP-190 (53 aa).

Mainly expressed in the fetal brain where it is specifically localized to the proximal axonal segments, cell bodies and growth cones. Lower level of expression was also detected in the fetal heart and the skeletal muscle. No expression in kidney, liver, lung or spleen.

The protein resides in the membrane. Functionally, neuronal antigen that may play a role in brain development. May be involved in neurite formation or axonal guidance. This Sus scrofa (Pig) protein is Neuronal protein NP-190.